The following is a 727-amino-acid chain: Adhesion G protein-coupled receptor L4 (727 aa).

The signal sequence occupies residues Met-1–Phe-19. At Leu-20–Ile-467 the chain is on the extracellular side. One can recognise an EGF-like 1; calcium-binding domain in the interval Asp-52 to Glu-90. 6 cysteine pairs are disulfide-bonded: Cys-56–Cys-69, Cys-63–Cys-78, Cys-106–Cys-118, Cys-112–Cys-127, Cys-408–Cys-438, and Cys-426–Cys-440. The region spanning Asp-102–Pro-139 is the EGF-like 2; calcium-binding domain. Residues Thr-282–Asn-456 form the GAIN-B domain. Residues Cys-408–Asn-456 form a GPS region. Residues Thr-468–Phe-488 form a helical membrane-spanning segment. Over Phe-489–Arg-496 the chain is Cytoplasmic. The chain crosses the membrane as a helical span at residues Thr-497–Gly-517. At Ile-518 to His-535 the chain is on the extracellular side. A helical transmembrane segment spans residues Tyr-536–Val-556. Residues Val-557–Arg-568 lie on the Cytoplasmic side of the membrane. Residues Asn-569–Gly-589 traverse the membrane as a helical segment. Over Tyr-590–Trp-609 the chain is Extracellular. Residues Ser-610–Ile-630 traverse the membrane as a helical segment. Residues Tyr-631–Ala-654 lie on the Cytoplasmic side of the membrane. Residues Arg-655–Ile-675 traverse the membrane as a helical segment. The Extracellular segment spans residues Leu-676–Thr-682. Residues Ala-683–Val-703 form a helical membrane-spanning segment.

This sequence belongs to the G-protein coupled receptor 2 family. Adhesion G-protein coupled receptor (ADGR) subfamily. Heterodimer of 2 chains generated by proteolytic processing; the large extracellular N-terminal fragment and the membrane-bound C-terminal fragment predominantly remain associated and non-covalently linked. Post-translationally, autoproteolytically processed at the GPS region of the GAIN-B domain; this cleavage modulates receptor activity.

It is found in the cell membrane. Functionally, orphan receptor that plays a role in vessel formation. The polypeptide is Adhesion G protein-coupled receptor L4 (Danio rerio (Zebrafish)).